The chain runs to 1080 residues: Phycobiliprotein ApcE (1080 aa).

Residues 18 to 76 (QTLAVATITQAEQQDRFLGTGELNELATYFASGAKRLEIAQTLTENSEIIVSRAANRIF) form a phycobilin-like 1 region. The interval 77–144 (VGGSPMSFLE…GPTPPGFRPI (68 aa)) is phycobilin-like loop. Residues 145-237 (NVARYGPSNM…YMDVLLTEFK (93 aa)) are phycobilin-like 2. Position 195 (Cys195) interacts with (2R,3E)-phycocyanobilin. 4 PBS-linker domains span residues 252–432 (DQQG…FRKV), 514–693 (LGPK…QKQE), 710–888 (PDIQ…KQND), and 922–1080 (STSA…SLGN). The disordered stretch occupies residues 906-930 (GTSSSGRNGFTDLGRSSTSAQGQLG).

Belongs to the phycobilisome linker protein family. In terms of assembly, phycobilisomes of this organism are composed of a two cylinder core, from which six rods radiate. The core is mainly composed of allophycocyanin alpha and beta chains, and of three minor components: the allophycocyanin alpha-B chain, a 18.3 kDa polypeptide, and the anchor polypeptide L-CM. Contains one covalently linked bilin chromophore. This protein autochromophorylates.

Its subcellular location is the cellular thylakoid membrane. Functionally, this protein is postulated to act both as terminal energy acceptor (by its phycobilin-like domains) and as a linker polypeptide (by its repeats and arms) that stabilizes the phycobilisome core architecture. In terms of biological role, has intrinsic bilin lyase activity. The protein is Phycobiliprotein ApcE (apcE) of Microchaete diplosiphon (Fremyella diplosiphon).